The chain runs to 319 residues: 4-diphosphocytidyl-2-C-methyl-D-erythritol kinase (319 aa).

The active site involves Lys18. 103–113 (PIGAGLAGGST) is an ATP binding site. Residue Asp145 is part of the active site.

Belongs to the GHMP kinase family. IspE subfamily.

The catalysed reaction is 4-CDP-2-C-methyl-D-erythritol + ATP = 4-CDP-2-C-methyl-D-erythritol 2-phosphate + ADP + H(+). Its pathway is isoprenoid biosynthesis; isopentenyl diphosphate biosynthesis via DXP pathway; isopentenyl diphosphate from 1-deoxy-D-xylulose 5-phosphate: step 3/6. Catalyzes the phosphorylation of the position 2 hydroxy group of 4-diphosphocytidyl-2C-methyl-D-erythritol. The sequence is that of 4-diphosphocytidyl-2-C-methyl-D-erythritol kinase from Prochlorococcus marinus (strain NATL2A).